The following is a 331-amino-acid chain: MKQTVYTASPESQQIHVWSLNHEGTLTLVQVVDVPGQVQPMVVSPDKRYLYVGVRPEFRVLAYRIAPDDGALTFAAESALPGSPTHISTDHHGRFVFVGSYNAGNVSVTRLQDGLPVELVDVVEGLDGCHSANITPDNRTLWVPALKQDRICLFTLSDDGHLVAQEPAEVNTVEGAGPRHMVFHPNRQYAYCVNELNSSVDVWQLKNPHGEIECVQTLDMMPADFSDTRWAADIHITPDGRHLYACDRTASLITVFSVSEDGSVLSVEGFQPTEAQPRGFNIDNSRKYLIAAGQKSHHIAVYEITGTQGLLTEKGRYAVGQGPMWVVVNAY.

It belongs to the cycloisomerase 2 family.

It catalyses the reaction 6-phospho-D-glucono-1,5-lactone + H2O = 6-phospho-D-gluconate + H(+). It participates in carbohydrate degradation; pentose phosphate pathway; D-ribulose 5-phosphate from D-glucose 6-phosphate (oxidative stage): step 2/3. Its function is as follows. Catalyzes the hydrolysis of 6-phosphogluconolactone to 6-phosphogluconate. The protein is 6-phosphogluconolactonase of Salmonella typhi.